We begin with the raw amino-acid sequence, 2294 residues long: Reducing polyketide synthase BOA9 (2294 aa).

One can recognise a Ketosynthase family 3 (KS3) domain in the interval proline 4–alanine 409. Residues isoleucine 537–glutamine 853 are malonyl-CoA:ACP transacylase (MAT) domain. The active-site For malonyltransferase activity is the serine 630. The N-terminal hotdog fold stretch occupies residues histidine 930–threonine 1067. Residues histidine 930–leucine 1104 form a dehydratase (DH) domain region. The region spanning histidine 930 to aspartate 1236 is the PKS/mFAS DH domain. Histidine 962 functions as the Proton acceptor; for dehydratase activity in the catalytic mechanism. The C-terminal hotdog fold stretch occupies residues glutamine 1078–aspartate 1236. Catalysis depends on aspartate 1142, which acts as the Proton donor; for dehydratase activity. The interval glycine 1618–valine 1908 is enoyl reductase (ER) domain. The segment at valine 1934–valine 2107 is ketoreductase (KR) domain. One can recognise a Carrier domain in the interval leucine 2214–arginine 2292. Serine 2251 is subject to O-(pantetheine 4'-phosphoryl)serine.

Its pathway is polyketide biosynthesis. Functionally, reducing polyketide synthase; part of the gene cluster B that mediates the biosynthesis of botcinic acid and its botcinin derivatives, acetate-derived polyketides that contribute to virulence when combined with the sesquiterpene botrydial. Botcinic acid and its derivatives have been shown to induce chlorosis and necrosis during host plant infection, but also have antifungal activities. Two polyketide synthases, BOA6 and BOA9, are involved in the biosynthesis of botcinins. BOA6 mediates the formation of the per-methylated tetraketide core by condensation of four units of malonyl-CoA with one unit of acetyl-CoA, which would be methylated in activated methylene groups to yield a bicyclic acid intermediate that could then either be converted to botrylactone derivatives or lose the starter acetate unit through a retro-Claisen type C-C bond cleavage to yield botcinin derivatives. The second polyketide synthase, BOA9, is probably required for the biosynthesis of the tetraketide side chain of botcinins. The methyltransferase (MT) domain within BOA6 is probably responsible for the incorporation of four methyl groups. The trans-enoyl reductase BOA5 might take over the enoyl reductase function of BOA6 that misses an ER domain. The monooxygenases BOA2, BOA3 and BOA4 might be involved in further hydroxylations at C4, C5 and C8, whereas BOA7, close to BOA9, could potentially be involved in the hydroxylation at C4 in the side chain of botcinins. This Botryotinia fuckeliana (strain B05.10) (Noble rot fungus) protein is Reducing polyketide synthase BOA9.